Reading from the N-terminus, the 802-residue chain is Threonine--tRNA ligase 2, cytoplasmic (802 aa).

Ala2 is subject to N-acetylalanine. Coiled-coil stretches lie at residues 3 to 23 (AEAL…EDIR) and 76 to 96 (AEER…AQEA). Residues 86–98 (ESAELEAAQEAGA) show a composition bias toward low complexity. Residues 86–123 (ESAELEAAQEAGAQPPPSQSQDKDMKKKKMKESEADSE) form a disordered region. Positions 106–123 (QDKDMKKKKMKESEADSE) are enriched in basic and acidic residues. The TGS domain maps to 157 to 222 (DTSNIITVRV…EGDSSLELLT (66 aa)). Ser453 is subject to Phosphoserine. Residues 786 to 792 (KLKNLRK) carry the Nuclear localization signal motif.

The protein belongs to the class-II aminoacyl-tRNA synthetase family. As to quaternary structure, may be a component of the multisynthetase complex (MSC), a large multi-subunit complex which contains at least eight different aminoacyl-tRNA synthetases plus three auxillary subunits AIMP1, AIMP2 and EEF1E1. Interacts with the MSC components EPRS1, AIMP1, AIMP2 and KARS1.

Its subcellular location is the cytoplasm. It is found in the nucleus. The catalysed reaction is tRNA(Thr) + L-threonine + ATP = L-threonyl-tRNA(Thr) + AMP + diphosphate + H(+). Catalyzes the attachment of threonine to tRNA(Thr) in a two-step reaction: threonine is first activated by ATP to form Thr-AMP and then transferred to the acceptor end of tRNA(Thr). Also edits incorrectly charged tRNA(Thr) via its editing domain, at the post-transfer stage. In Homo sapiens (Human), this protein is Threonine--tRNA ligase 2, cytoplasmic.